The chain runs to 410 residues: F-box protein At3g19890 (410 aa).

An F-box domain is found at 2–49; sequence TMISDLSKDLVEEILSKAPITSLGAVRSTHKQWNALSKGRLLYKAEAK. The segment at 386–410 is disordered; sequence EDKCKSIKMVDTKRQRKKRKRKSKR. Residues 387–398 show a composition bias toward basic and acidic residues; it reads DKCKSIKMVDTK. The span at 399–410 shows a compositional bias: basic residues; that stretch reads RQRKKRKRKSKR.

This is F-box protein At3g19890 from Arabidopsis thaliana (Mouse-ear cress).